The sequence spans 185 residues: Ribosome maturation factor RimM (185 aa).

The 76-residue stretch at 96–171 (EDEFYHSDLL…VITIDPPEDV (76 aa)) folds into the PRC barrel domain. Residues 165 to 185 (IDPPEDVGSKAEEEGGGAPDD) form a disordered region.

It belongs to the RimM family. Binds ribosomal protein uS19.

The protein resides in the cytoplasm. Its function is as follows. An accessory protein needed during the final step in the assembly of 30S ribosomal subunit, possibly for assembly of the head region. Essential for efficient processing of 16S rRNA. May be needed both before and after RbfA during the maturation of 16S rRNA. It has affinity for free ribosomal 30S subunits but not for 70S ribosomes. This is Ribosome maturation factor RimM from Maricaulis maris (strain MCS10) (Caulobacter maris).